Reading from the N-terminus, the 396-residue chain is NADH-quinone oxidoreductase subunit D (396 aa).

This sequence belongs to the complex I 49 kDa subunit family. In terms of assembly, NDH-1 is composed of 14 different subunits. Subunits NuoB, C, D, E, F, and G constitute the peripheral sector of the complex.

The protein resides in the cell inner membrane. It carries out the reaction a quinone + NADH + 5 H(+)(in) = a quinol + NAD(+) + 4 H(+)(out). Functionally, NDH-1 shuttles electrons from NADH, via FMN and iron-sulfur (Fe-S) centers, to quinones in the respiratory chain. The immediate electron acceptor for the enzyme in this species is believed to be ubiquinone. Couples the redox reaction to proton translocation (for every two electrons transferred, four hydrogen ions are translocated across the cytoplasmic membrane), and thus conserves the redox energy in a proton gradient. This is NADH-quinone oxidoreductase subunit D from Bartonella henselae (strain ATCC 49882 / DSM 28221 / CCUG 30454 / Houston 1) (Rochalimaea henselae).